Reading from the N-terminus, the 494-residue chain is Lysine--tRNA ligase (494 aa).

The Mg(2+) site is built by Glu-407 and Glu-414.

The protein belongs to the class-II aminoacyl-tRNA synthetase family. As to quaternary structure, homodimer. Requires Mg(2+) as cofactor.

The protein resides in the cytoplasm. The enzyme catalyses tRNA(Lys) + L-lysine + ATP = L-lysyl-tRNA(Lys) + AMP + diphosphate. The sequence is that of Lysine--tRNA ligase from Lactococcus lactis subsp. lactis (strain IL1403) (Streptococcus lactis).